A 234-amino-acid polypeptide reads, in one-letter code: LexA repressor (234 aa).

Basic and acidic residues predominate over residues 1 to 11; that stretch reads MNEATSHEGPK. The interval 1 to 34 is disordered; it reads MNEATSHEGPKRSLPGRPPGIRADSSGLTDRQRR. The H-T-H motif DNA-binding region spans 52–72; it reads MREIGQAVGLSSTSSVAHQLM. Over residues 83–94 the composition is skewed to basic and acidic residues; it reads DPHRPRAYEVRG. A disordered region spans residues 83–109; the sequence is DPHRPRAYEVRGSDQSSSVQPTDTAGK. Residues 95–105 show a composition bias toward polar residues; that stretch reads SDQSSSVQPTD. Active-site for autocatalytic cleavage activity residues include Ser-158 and Lys-195.

This sequence belongs to the peptidase S24 family. In terms of assembly, homodimer.

It catalyses the reaction Hydrolysis of Ala-|-Gly bond in repressor LexA.. In terms of biological role, represses a number of genes involved in the response to DNA damage (SOS response), including recA and lexA. In the presence of single-stranded DNA, RecA interacts with LexA causing an autocatalytic cleavage which disrupts the DNA-binding part of LexA, leading to derepression of the SOS regulon and eventually DNA repair. The protein is LexA repressor of Streptomyces avermitilis (strain ATCC 31267 / DSM 46492 / JCM 5070 / NBRC 14893 / NCIMB 12804 / NRRL 8165 / MA-4680).